The following is a 102-amino-acid chain: Large ribosomal subunit protein uL24c (102 aa).

This sequence belongs to the universal ribosomal protein uL24 family. As to quaternary structure, part of the 50S ribosomal subunit.

The protein resides in the plastid. It is found in the chloroplast. Functionally, one of two assembly initiator proteins, it binds directly to the 5'-end of the 23S rRNA, where it nucleates assembly of the 50S subunit. The chain is Large ribosomal subunit protein uL24c (rpl24) from Rhodomonas salina (Cryptomonas salina).